Consider the following 272-residue polypeptide: Putative hydro-lyase RPB_3621 (272 aa).

It belongs to the D-glutamate cyclase family.

This chain is Putative hydro-lyase RPB_3621, found in Rhodopseudomonas palustris (strain HaA2).